A 280-amino-acid chain; its full sequence is Golgi phosphoprotein 3-like (280 aa).

Positions 1–30 (MTTLTRRGRRADVGQENRVDSEDYIKDKDE) are disordered. A compositionally biased stretch (basic and acidic residues) spans 10-30 (RADVGQENRVDSEDYIKDKDE). 4 residues coordinate a 1,2-diacyl-sn-glycero-3-phospho-(1D-myo-inositol 4-phosphate): Trp62, Arg71, Arg152, and Arg155. Residues 171–182 (EKQNFLLFDMTT) form a beta-hairpin required for oligomerization region.

This sequence belongs to the GOLPH3/VPS74 family. As to quaternary structure, homooligomer.

Its subcellular location is the golgi apparatus. It is found in the golgi stack membrane. The protein resides in the trans-Golgi network membrane. Phosphatidylinositol-4-phosphate-binding protein that may play a role in the process of vesicle budding at the Golgi and anterograde transport to the plasma membrane. The polypeptide is Golgi phosphoprotein 3-like (golph3l) (Xenopus tropicalis (Western clawed frog)).